The sequence spans 377 residues: MAEEVVVVAKFDYVAQQEQELDIKKNERLWLLDDSKSWWRVRNSMNKTGFVPSNYVERKNSARKASIVKNLKDTLGIGKVKRKPSVPDTASPADDSFVDPGERLYDLNMPAFVKFNYMAEREDELSLIKGTKVIVMEKCSDGWWRGSYNGQIGWFPSNYVTEEGDSPLGDHVGSLSEKLAAVVNNLNTGQVLHVVQALYPFSSSNDEELNFEKGDVMDVIEKPENDPEWWKCRKINGMVGLVPKNYVTIMQNNPLTSGLEPSPPQCDYIRPSLTGKFAGNPWYYGKVTRHQAEMALNERGHEGDFLIRDSESSPNDFSVSLKAQGKNKHFKVQLKETVYCIGQRKFSTMEELVEHYKKAPIFTSEQGEKLYLVKHLS.

Ala2 carries the post-translational modification N-acetylalanine. Residues 2 to 61 (AEEVVVVAKFDYVAQQEQELDIKKNERLWLLDDSKSWWRVRNSMNKTGFVPSNYVERKNS) enclose the SH3 1 domain. Phosphoserine is present on residues Ser85, Ser91, and Ser96. Tyr105 is modified (phosphotyrosine). Positions 106–165 (DLNMPAFVKFNYMAEREDELSLIKGTKVIVMEKCSDGWWRGSYNGQIGWFPSNYVTEEGD) constitute an SH3 2 domain. Ser166 bears the Phosphoserine mark. The region spanning 190 to 252 (QVLHVVQALY…PKNYVTIMQN (63 aa)) is the SH3 3 domain. Positions 282-376 (WYYGKVTRHQ…GEKLYLVKHL (95 aa)) constitute an SH2 domain.

In terms of assembly, interacts (via SH2 domain and SH3 domain 2) with EGFR. Interacts with PAK1 and SOS1. Interacts (via SH3 domains) with PKN2. Associates with BLNK, PLCG1, VAV1 and NCK1 in a B-cell antigen receptor-dependent fashion. Interacts with SOCS7. This interaction is required for nuclear import. Part of a complex containing PPP1R15B, PP1 and NCK1. Interacts with RALGPS1. Interacts with CAV2 (tyrosine phosphorylated form). Interacts with ADAM15. Interacts with FASLG. Directly interacts with RASA1. Interacts with isoform 4 of MINK1. Interacts with FLT1 (tyrosine phosphorylated). Interacts with KDR (tyrosine phosphorylated). Interacts (via SH2 domain) with EPHB1; activates the JUN cascade to regulate cell adhesion. Interacts with EPHA2. Interacts (via SH2 domain) with PDGFRB (tyrosine phosphorylated). Interacts with the inactive form of EIF2AK2/PKR. Interacts with PTPN1. Interacts with INSR/insulin receptor (in response to insulin stimulation); this interaction may mediate PTPN1 recruitment leading to INSR dephosphorylation. Interacts with CD3E (via Proline-rich sequence); the interaction is ligand dependent but independent of tyrosine kinase activation. Interacts with EGFR. Interacts with IRS1. In terms of processing, phosphorylated on Ser and Tyr residues. Phosphorylated in response to activation of EGFR and FcERI. Phosphorylated by activated PDGFRB.

Its subcellular location is the cytoplasm. It is found in the endoplasmic reticulum. It localises to the nucleus. In terms of biological role, adapter protein which associates with tyrosine-phosphorylated growth factor receptors, such as KDR and PDGFRB, or their cellular substrates. Maintains low levels of EIF2S1 phosphorylation by promoting its dephosphorylation by PP1. Plays a role in the DNA damage response, not in the detection of the damage by ATM/ATR, but for efficient activation of downstream effectors, such as that of CHEK2. Plays a role in ELK1-dependent transcriptional activation in response to activated Ras signaling. Modulates the activation of EIF2AK2/PKR by dsRNA. May play a role in cell adhesion and migration through interaction with ephrin receptors. Also acts as an adpater protein for the T cell receptor complex (TCR-CD3E). Upon ligand engagement, is recruited by CD3E and promotes maturation of the immune synapse and T cell activation. This is SH2/SH3 adapter protein Nck1 (Nck1) from Mus musculus (Mouse).